The primary structure comprises 237 residues: Demethylmenaquinone methyltransferase (237 aa).

Residues Thr58, Asp79, and 106-107 each bind S-adenosyl-L-methionine; that span reads NA.

This sequence belongs to the class I-like SAM-binding methyltransferase superfamily. MenG/UbiE family.

It carries out the reaction a 2-demethylmenaquinol + S-adenosyl-L-methionine = a menaquinol + S-adenosyl-L-homocysteine + H(+). It participates in quinol/quinone metabolism; menaquinone biosynthesis; menaquinol from 1,4-dihydroxy-2-naphthoate: step 2/2. Methyltransferase required for the conversion of demethylmenaquinol (DMKH2) to menaquinol (MKH2). This is Demethylmenaquinone methyltransferase from Bacillus cereus (strain B4264).